The primary structure comprises 352 residues: S-norcoclaurine synthase 1 (352 aa).

The region spanning 200–304 (KPLRTVFNRE…RLSIAAFHDP (105 aa)) is the Fe2OG dioxygenase domain. Residues His228, Asp230, and His285 each coordinate Fe cation.

It belongs to the iron/ascorbate-dependent oxidoreductase family. As to quaternary structure, monomer. Requires Fe cation as cofactor.

It carries out the reaction (4-hydroxyphenyl)acetaldehyde + dopamine = (S)-norcoclaurine + H2O. Its activity is regulated as follows. Inhibited by O-phenanthroline, but not by EDTA. In terms of biological role, involved in the biosynthesis of the common precursor of all benzylisoquinoline alkaloids such as morphine, sanguinarine, codeine or berberine. Condenses dopamine and phenylacetaldehyde, 3,4-dihydrophenylacetaldehyde or 4-hydroxyphenylacetaldehyde. This Coptis japonica (Japanese goldthread) protein is S-norcoclaurine synthase 1 (NCS1).